The chain runs to 607 residues: Threonine--tRNA ligase (607 aa).

The tract at residues 1–143 is editing domain; that stretch reads MRVLYIHAER…SFKPEEARVA (143 aa). Catalytic regions lie at residues 193–489 and 194–489; these read PRYL…PRLP and RYLD…PRLP. Zn(2+) is bound by residues Cys-286, His-337, and His-458.

The protein belongs to the class-II aminoacyl-tRNA synthetase family. Homodimer. Zn(2+) is required as a cofactor.

The protein localises to the cytoplasm. It carries out the reaction tRNA(Thr) + L-threonine + ATP = L-threonyl-tRNA(Thr) + AMP + diphosphate + H(+). Catalyzes the attachment of threonine to tRNA(Thr) in a two-step reaction: L-threonine is first activated by ATP to form Thr-AMP and then transferred to the acceptor end of tRNA(Thr). Also edits incorrectly charged L-seryl-tRNA(Thr). This Pyrobaculum calidifontis (strain DSM 21063 / JCM 11548 / VA1) protein is Threonine--tRNA ligase.